Reading from the N-terminus, the 98-residue chain is MSPILINMLLAFTISLIGLLIYRSHMMSSLLCLEGMMLSLFILTSTLALTMHFTLMTMMPIILLVFAACEAAIGLSLLVMVSNTYGLDYVQNLNLLQC.

Transmembrane regions (helical) follow at residues 1 to 21 (MSPI…GLLI), 30 to 50 (LLCL…LALT), and 61 to 81 (IILL…LVMV).

It belongs to the complex I subunit 4L family. In terms of assembly, core subunit of respiratory chain NADH dehydrogenase (Complex I) which is composed of 45 different subunits.

Its subcellular location is the mitochondrion inner membrane. It carries out the reaction a ubiquinone + NADH + 5 H(+)(in) = a ubiquinol + NAD(+) + 4 H(+)(out). Functionally, core subunit of the mitochondrial membrane respiratory chain NADH dehydrogenase (Complex I) which catalyzes electron transfer from NADH through the respiratory chain, using ubiquinone as an electron acceptor. Part of the enzyme membrane arm which is embedded in the lipid bilayer and involved in proton translocation. The chain is NADH-ubiquinone oxidoreductase chain 4L (MT-ND4L) from Chrysochloris asiatica (Cape golden mole).